The sequence spans 87 residues: Keratin-associated protein 7-1 (87 aa).

The tract at residues 43-84 (GCGCNGYSSLGYSFGGSNINNLGGCYGGSFYRPWGSGSGFGY) is 11 X 2 AA repeats of G-[YCGS].

Belongs to the KRTAP type 7 family. In terms of assembly, interacts with hair keratins. In terms of tissue distribution, expressed in the upper portion of the hair cortex.

In terms of biological role, in the hair cortex, hair keratin intermediate filaments are embedded in an interfilamentous matrix, consisting of hair keratin-associated proteins (KRTAP), which are essential for the formation of a rigid and resistant hair shaft through their extensive disulfide bond cross-linking with abundant cysteine residues of hair keratins. The matrix proteins include the high-sulfur and high-glycine-tyrosine keratins. The sequence is that of Keratin-associated protein 7-1 (KRTAP7-1) from Homo sapiens (Human).